The primary structure comprises 812 residues: MPTEEHQTYRELPMLPLRGVLVFPYTVIHLDVGRKKSINAIEDAMLGSKEIFLATQKEAQTDEPDEEDIYEVGTVAEIRQILKMPGGTMRVLVEGLFRAEINAYLANDPYMKVRVEELRDKKIKSPELEALMRNLVGQFEQYVRMSKKIPPETVVSVVAIEEGGRLADVIASHLNLRINEKQRILELSDINKRLNYLCELLAKEMEVLELERKINIRVRKQMEKTQKEYYLREQIKAIQKELGEKDERSSEVEEFRERIKKANMPKDAEEKAFKELERLEKMPPMVAEAVVVRNYLDWILSLPWSLETRDRLDLKAAEAILDEDHYGLEKPKERILEYLAIRKLAKKMKGPILCLVGPPGVGKTSLGKSVGRSLGRKFIRMSLGGIRDEAEIRGHRRTYVGSMPGRILQGMKTAGSKNPVFLLDEIDKMTMDFRGDPASALLEVLDPEQNYIFSDHYLEIPFDLSKVMFITTANSVFNIPRPLLDRMEIIEITGYTEEDKVHIATDYLVPKQIKEHGLKESNITFSEGTLRRIIREYTREAGVRNLERQIASICRKVARQVVEDKDTFVHVASNSLNRFLGAGRYRYGVAESENQVGVATGLAWTESGGDILSIEVALLKGKGNLTLTGKLGEVMKESAQAALTYVRSKADELGINDEIRDKYDVHIHIPEGAIPKDGPSAGITLATALASAMSGLPVRSDVAMTGEITLRGRILPIGGVKEKILAAHRAGIAKVLLPVENKKDLAEIPAPVKRKIKLVLVSHMDEVLEETLLKLEAIQPGEDFPGVLLNPELVGENLNQDRVEPEANKDLC.

Residues 12–205 enclose the Lon N-terminal domain; the sequence is LPMLPLRGVL…YLCELLAKEM (194 aa). Residue 357–364 coordinates ATP; the sequence is GPPGVGKT. The 182-residue stretch at 593-774 folds into the Lon proteolytic domain; it reads ENQVGVATGL…DEVLEETLLK (182 aa). Active-site residues include S680 and K723.

Belongs to the peptidase S16 family. As to quaternary structure, homohexamer. Organized in a ring with a central cavity.

It localises to the cytoplasm. It carries out the reaction Hydrolysis of proteins in presence of ATP.. ATP-dependent serine protease that mediates the selective degradation of mutant and abnormal proteins as well as certain short-lived regulatory proteins. Required for cellular homeostasis and for survival from DNA damage and developmental changes induced by stress. Degrades polypeptides processively to yield small peptide fragments that are 5 to 10 amino acids long. Binds to DNA in a double-stranded, site-specific manner. This Syntrophomonas wolfei subsp. wolfei (strain DSM 2245B / Goettingen) protein is Lon protease.